Here is a 184-residue protein sequence, read N- to C-terminus: ATP synthase subunit b 1 (184 aa).

A helical transmembrane segment spans residues 4-24 (LSILAVLAASPAMAATGPFLS).

The protein belongs to the ATPase B chain family. In terms of assembly, F-type ATPases have 2 components, F(1) - the catalytic core - and F(0) - the membrane proton channel. F(1) has five subunits: alpha(3), beta(3), gamma(1), delta(1), epsilon(1). F(0) has three main subunits: a(1), b(2) and c(10-14). The alpha and beta chains form an alternating ring which encloses part of the gamma chain. F(1) is attached to F(0) by a central stalk formed by the gamma and epsilon chains, while a peripheral stalk is formed by the delta and b chains.

The protein localises to the cell inner membrane. Functionally, f(1)F(0) ATP synthase produces ATP from ADP in the presence of a proton or sodium gradient. F-type ATPases consist of two structural domains, F(1) containing the extramembraneous catalytic core and F(0) containing the membrane proton channel, linked together by a central stalk and a peripheral stalk. During catalysis, ATP synthesis in the catalytic domain of F(1) is coupled via a rotary mechanism of the central stalk subunits to proton translocation. In terms of biological role, component of the F(0) channel, it forms part of the peripheral stalk, linking F(1) to F(0). This is ATP synthase subunit b 1 from Cereibacter sphaeroides (strain ATCC 17029 / ATH 2.4.9) (Rhodobacter sphaeroides).